The following is a 552-amino-acid chain: Segmentation polarity homeobox protein engrailed (552 aa).

The segment covering 93–108 has biased composition (low complexity); it reads SGSGSPASCSTPASST. Disordered regions lie at residues 93–112, 130–171, 309–419, and 433–460; these read SGSGSPASCSTPASSTPLTI, THTT…TAKP, PAAP…GGKN, and DRPSSGPRYRRPKQPKDKTNDEKRPRTA. Residues 135–151 show a composition bias toward acidic residues; it reads EEEEAEEDDDIDVDVDD. The span at 317–382 shows a compositional bias: low complexity; that stretch reads PPLSSSASSL…SGSGVNASSP (66 aa). A compositionally biased stretch (basic and acidic residues) spans 446-457; the sequence is QPKDKTNDEKRP. Positions 454–513 form a DNA-binding region, homeobox; sequence EKRPRTAFSSEQLARLKREFNENRYLTERRRQQLSSELGLNEAQIKIWFQNKRAKIKKST.

Belongs to the engrailed homeobox family. Phosphorylated. Phosphorylation may directly or allosterically modify its function.

The protein localises to the nucleus. This protein specifies the body segmentation pattern. It is required for the development of the central nervous system. Transcriptional regulator that represses activated promoters. Wg signaling operates by inactivating the SGG repression of EN autoactivation. In Drosophila melanogaster (Fruit fly), this protein is Segmentation polarity homeobox protein engrailed (en).